The sequence spans 146 residues: Small RNA-binding protein 11, chloroplastic (146 aa).

Residues 1-31 constitute a chloroplast transit peptide; that stretch reads MAALARIGGRHLKSVCLINSSASCFFTQRRG. Residues 34 to 112 enclose the RRM domain; that stretch reads SKLFIGGLSF…RTIFVDYAKA (79 aa). Position 42 is a phosphoserine (S42).

As to expression, expressed in rosette leaves, cauline leaves, stems and flowers.

The protein localises to the plastid. Its subcellular location is the chloroplast. In terms of biological role, probable RNA-binding protein that may be involved in salt and oxidative stress tolerance. This chain is Small RNA-binding protein 11, chloroplastic, found in Arabidopsis thaliana (Mouse-ear cress).